Reading from the N-terminus, the 326-residue chain is Interleukin-1-binding protein (326 aa).

A signal peptide spans 1–18 (MSIPPVIFLPIFFYSSFV). Ig-like C2-type domains follow at residues 24 to 115 (PECI…LNLT), 122 to 208 (SNID…YDVT), and 221 to 322 (PPTM…KTVT). Cysteines 48 and 99 form a disulfide. Asn-80, Asn-103, and Asn-113 each carry an N-linked (GlcNAc...) asparagine; by host glycan. A disulfide bridge links Cys-143 with Cys-194. Asn-237 is a glycosylation site (N-linked (GlcNAc...) asparagine; by host). The cysteines at positions 242 and 309 are disulfide-linked.

Belongs to the interleukin-1 receptor family. Interacts with mouse Il1b.

The protein localises to the secreted. Its function is as follows. May reduce the host inflammatory response by interacting with inteleukin-1 beta (Il1b) and thus decreasing the association between IL1B and its cellular receptor. In Bos taurus (Bovine), this protein is Interleukin-1-binding protein (OPG201).